The chain runs to 710 residues: Integrator complex subunit 10 (710 aa).

Phosphoserine is present on residues S231, S381, and S382. K464 participates in a covalent cross-link: Glycyl lysine isopeptide (Lys-Gly) (interchain with G-Cter in SUMO2).

Belongs to the Integrator subunit 10 family. Component of the Integrator complex, composed of core subunits INTS1, INTS2, INTS3, INTS4, INTS5, INTS6, INTS7, INTS8, INTS9/RC74, INTS10, INTS11/CPSF3L, INTS12, INTS13, INTS14 and INTS15. The core complex associates with protein phosphatase 2A subunits PPP2CA and PPP2R1A, to form the Integrator-PP2A (INTAC) complex. INTS10 is part of the tail subcomplex, composed of INTS10, INTS13, INTS14 and INTS15.

The protein resides in the nucleus. In terms of biological role, component of the integrator complex, a multiprotein complex that terminates RNA polymerase II (Pol II) transcription in the promoter-proximal region of genes. The integrator complex provides a quality checkpoint during transcription elongation by driving premature transcription termination of transcripts that are unfavorably configured for transcriptional elongation: the complex terminates transcription by (1) catalyzing dephosphorylation of the C-terminal domain (CTD) of Pol II subunit POLR2A/RPB1 and SUPT5H/SPT5, (2) degrading the exiting nascent RNA transcript via endonuclease activity and (3) promoting the release of Pol II from bound DNA. The integrator complex is also involved in terminating the synthesis of non-coding Pol II transcripts, such as enhancer RNAs (eRNAs), small nuclear RNAs (snRNAs), telomerase RNAs and long non-coding RNAs (lncRNAs). Within the integrator complex, INTS10 is part of the integrator tail module that acts as a platform for the recruitment of transcription factors at promoters. May be not involved in the recruitment of cytoplasmic dynein to the nuclear envelope, probably as component of the integrator complex. The polypeptide is Integrator complex subunit 10 (Homo sapiens (Human)).